A 492-amino-acid chain; its full sequence is NADH-quinone oxidoreductase subunit N 2 (492 aa).

14 helical membrane-spanning segments follow: residues 16–36, 44–64, 87–107, 118–138, 140–160, 175–195, 216–236, 250–270, 282–302, 309–329, 333–353, 381–401, 416–438, and 455–475; these read ILPE…DALI, PLGY…ACQA, FSLF…LVSF, GEYY…TSAT, LVLI…LAAM, FLLG…IFGA, PIIY…VAAA, PSPI…AVLL, FWIV…GALV, LLAY…AAAK, ISAA…AFAV, AAIL…GGFF, VWLT…RIIV, and PFGL…LGVL.

The protein belongs to the complex I subunit 2 family. In terms of assembly, NDH-1 is composed of 14 different subunits. Subunits NuoA, H, J, K, L, M, N constitute the membrane sector of the complex.

It is found in the cell inner membrane. The catalysed reaction is a quinone + NADH + 5 H(+)(in) = a quinol + NAD(+) + 4 H(+)(out). NDH-1 shuttles electrons from NADH, via FMN and iron-sulfur (Fe-S) centers, to quinones in the respiratory chain. The immediate electron acceptor for the enzyme in this species is believed to be ubiquinone. Couples the redox reaction to proton translocation (for every two electrons transferred, four hydrogen ions are translocated across the cytoplasmic membrane), and thus conserves the redox energy in a proton gradient. This Koribacter versatilis (strain Ellin345) protein is NADH-quinone oxidoreductase subunit N 2.